The following is a 152-amino-acid chain: MAEESFYGVTLTAESDSVTWDVDEDYARGQKLVIKQILLGAEAKENEFNVVEVNTPKDSVQIPIAVLKAGETRAVNPDVEFYESKVTFKLIKGSGPVYIHGHNIKDDVEVVDMEEDDEEDDVAEDEEDEHPKKRAKIENAADGKNAKNNKKK.

A compositionally biased stretch (acidic residues) spans 109 to 128; that stretch reads EVVDMEEDDEEDDVAEDEED. The interval 109–152 is disordered; it reads EVVDMEEDDEEDDVAEDEEDEHPKKRAKIENAADGKNAKNNKKK. Positions 136–145 are enriched in basic and acidic residues; that stretch reads KIENAADGKN.

It belongs to the nucleoplasmin family. As to quaternary structure, decamer formed by two pentameric rings associated in a head-to-head fashion.

The protein resides in the nucleus. Its function is as follows. Binds to core histones and functions in the ATP-facilitated assembly of approximately regularly spaced nucleosomal arrays. May participate in parallel with other histone-binding proteins such as NAP-1. In terms of biological role, inactive for chromatin assembly. In vitro it appears to form a high molecular mass aggregate with the core histones. The sequence is that of Nucleoplasmin-like protein (Nlp) from Drosophila melanogaster (Fruit fly).